The chain runs to 346 residues: Uroporphyrinogen decarboxylase (346 aa).

Substrate contacts are provided by residues 21-25 (RQAGR), Asp-71, Tyr-146, Ser-201, and His-316.

The protein belongs to the uroporphyrinogen decarboxylase family. In terms of assembly, homodimer.

The protein resides in the cytoplasm. The catalysed reaction is uroporphyrinogen III + 4 H(+) = coproporphyrinogen III + 4 CO2. Its pathway is porphyrin-containing compound metabolism; protoporphyrin-IX biosynthesis; coproporphyrinogen-III from 5-aminolevulinate: step 4/4. Catalyzes the decarboxylation of four acetate groups of uroporphyrinogen-III to yield coproporphyrinogen-III. The sequence is that of Uroporphyrinogen decarboxylase from Rickettsia africae (strain ESF-5).